Reading from the N-terminus, the 554-residue chain is 3-(3-hydroxy-phenyl)propionate/3-hydroxycinnamic acid hydroxylase (554 aa).

Residues Q17–K46 and F285–D295 each bind FAD.

It belongs to the PheA/TfdB FAD monooxygenase family. It depends on FAD as a cofactor.

The enzyme catalyses 3-(3-hydroxyphenyl)propanoate + NADH + O2 + H(+) = 3-(2,3-dihydroxyphenyl)propanoate + NAD(+) + H2O. It carries out the reaction (2E)-3-(3-hydroxyphenyl)prop-2-enoate + NADH + O2 + H(+) = (2E)-3-(2,3-dihydroxyphenyl)prop-2-enoate + NAD(+) + H2O. It participates in aromatic compound metabolism; 3-phenylpropanoate degradation. In terms of biological role, catalyzes the insertion of one atom of molecular oxygen into position 2 of the phenyl ring of 3-(3-hydroxyphenyl)propionate (3-HPP) and hydroxycinnamic acid (3HCI). This Escherichia coli (strain 55989 / EAEC) protein is 3-(3-hydroxy-phenyl)propionate/3-hydroxycinnamic acid hydroxylase.